The following is a 539-amino-acid chain: Gamma-2-syntrophin (539 aa).

A PDZ domain is found at 73–156 (TVTLRRQPVG…DVTITVEYLR (84 aa)). The PH domain occupies 296-421 (QVVHMGWVNE…WEKAFQRATF (126 aa)).

The protein belongs to the syntrophin family. In terms of assembly, interacts with the dystrophin protein DMD and related proteins DTNA and DTNB.

The protein resides in the cell membrane. It is found in the sarcolemma. It localises to the cytoplasm. The protein localises to the cytoskeleton. Adapter protein that binds to and probably organizes the subcellular localization of a variety of proteins. May link various receptors to the actin cytoskeleton and the dystrophin glycoprotein complex. The polypeptide is Gamma-2-syntrophin (Sntg2) (Mus musculus (Mouse)).